Here is a 92-residue protein sequence, read N- to C-terminus: C-C motif chemokine 4-like (92 aa).

A signal peptide spans 1–23 (MKLCVTVLSLLVLVAAFCSLALS). 2 disulfide bridges follow: Cys-34/Cys-58 and Cys-35/Cys-74.

This sequence belongs to the intercrine beta (chemokine CC) family. Interacts with CCR5. Detected in B-cells.

It is found in the secreted. Its function is as follows. Chemokine that induces chemotaxis of cells expressing CCR5 or CCR1. Inhibits HIV replication in peripheral blood monocytes that express CCR5. The sequence is that of C-C motif chemokine 4-like (CCL4L1) from Homo sapiens (Human).